The primary structure comprises 249 residues: Triosephosphate isomerase (249 aa).

A substrate-binding site is contributed by 9 to 11; it reads NWK. His-95 serves as the catalytic Electrophile. Glu-166 serves as the catalytic Proton acceptor. Substrate is bound by residues Gly-172, Ser-211, and 232–233; that span reads GG.

The protein belongs to the triosephosphate isomerase family. As to quaternary structure, homodimer.

It localises to the cytoplasm. The catalysed reaction is D-glyceraldehyde 3-phosphate = dihydroxyacetone phosphate. It functions in the pathway carbohydrate biosynthesis; gluconeogenesis. Its pathway is carbohydrate degradation; glycolysis; D-glyceraldehyde 3-phosphate from glycerone phosphate: step 1/1. Involved in the gluconeogenesis. Catalyzes stereospecifically the conversion of dihydroxyacetone phosphate (DHAP) to D-glyceraldehyde-3-phosphate (G3P). The chain is Triosephosphate isomerase from Legionella pneumophila (strain Paris).